The following is a 1057-amino-acid chain: Carbamoyl phosphate synthase large chain (1057 aa).

The segment at 1–401 (MPKRNDIKTI…SLLKAIRSLE (401 aa)) is carboxyphosphate synthetic domain. Residues arginine 129, arginine 169, glycine 175, glycine 176, lysine 208, isoleucine 210, glutamate 215, glycine 241, isoleucine 242, histidine 243, glutamine 284, and glutamate 298 each contribute to the ATP site. In terms of domain architecture, ATP-grasp 1 spans 133–327 (RTLMNDLNVP…IAKLAAKIAV (195 aa)). Residues glutamine 284, glutamate 298, and asparagine 300 each coordinate Mg(2+). Glutamine 284, glutamate 298, and asparagine 300 together coordinate Mn(2+). The oligomerization domain stretch occupies residues 402 to 546 (YGVHHLGLPN…YGTYETENES (145 aa)). The interval 547-929 (IVTDKEKILV…ALFKGLTGSG (383 aa)) is carbamoyl phosphate synthetic domain. Residues 671–861 (EALLRKINVP…MAQLAMRAII (191 aa)) enclose the ATP-grasp 2 domain. 10 residues coordinate ATP: arginine 707, arginine 746, leucine 748, glutamate 752, glycine 777, valine 778, histidine 779, serine 780, glutamine 820, and glutamate 832. Glutamine 820, glutamate 832, and asparagine 834 together coordinate Mg(2+). Positions 820, 832, and 834 each coordinate Mn(2+). In terms of domain architecture, MGS-like spans 930–1057 (VEVKDHGTVL…ESMTFTMRQM (128 aa)). The allosteric domain stretch occupies residues 930-1057 (VEVKDHGTVL…ESMTFTMRQM (128 aa)).

This sequence belongs to the CarB family. In terms of assembly, composed of two chains; the small (or glutamine) chain promotes the hydrolysis of glutamine to ammonia, which is used by the large (or ammonia) chain to synthesize carbamoyl phosphate. Tetramer of heterodimers (alpha,beta)4. Mg(2+) is required as a cofactor. It depends on Mn(2+) as a cofactor.

It carries out the reaction hydrogencarbonate + L-glutamine + 2 ATP + H2O = carbamoyl phosphate + L-glutamate + 2 ADP + phosphate + 2 H(+). The catalysed reaction is hydrogencarbonate + NH4(+) + 2 ATP = carbamoyl phosphate + 2 ADP + phosphate + 2 H(+). Its pathway is amino-acid biosynthesis; L-arginine biosynthesis; carbamoyl phosphate from bicarbonate: step 1/1. It functions in the pathway pyrimidine metabolism; UMP biosynthesis via de novo pathway; (S)-dihydroorotate from bicarbonate: step 1/3. Its function is as follows. Large subunit of the glutamine-dependent carbamoyl phosphate synthetase (CPSase). CPSase catalyzes the formation of carbamoyl phosphate from the ammonia moiety of glutamine, carbonate, and phosphate donated by ATP, constituting the first step of 2 biosynthetic pathways, one leading to arginine and/or urea and the other to pyrimidine nucleotides. The large subunit (synthetase) binds the substrates ammonia (free or transferred from glutamine from the small subunit), hydrogencarbonate and ATP and carries out an ATP-coupled ligase reaction, activating hydrogencarbonate by forming carboxy phosphate which reacts with ammonia to form carbamoyl phosphate. In Staphylococcus aureus (strain USA300 / TCH1516), this protein is Carbamoyl phosphate synthase large chain.